The sequence spans 284 residues: Putative ABC transporter ATP-binding protein PH1815 (284 aa).

Positions 4 to 244 constitute an ABC transporter domain; the sequence is IEVEDVSFRY…VEFLRTIGVK (241 aa). Residue 38–45 coordinates ATP; that stretch reads GPSGSGKS.

This sequence belongs to the ABC transporter superfamily.

The protein resides in the cell membrane. Functionally, probably part of an ABC transporter complex. Responsible for energy coupling to the transport system. This Pyrococcus horikoshii (strain ATCC 700860 / DSM 12428 / JCM 9974 / NBRC 100139 / OT-3) protein is Putative ABC transporter ATP-binding protein PH1815.